The sequence spans 315 residues: Glutamyl-Q tRNA(Asp) synthetase (315 aa).

L-glutamate-binding positions include 23–27 (RFAPS) and glutamate 59. A 'HIGH' region motif is present at residues 26-36 (PSPTGPLHIGS). The Zn(2+) site is built by cysteine 115, cysteine 117, tyrosine 142, and cysteine 146. Residues tyrosine 202 and arginine 220 each contribute to the L-glutamate site. Residues 258 to 262 (KLSKQ) carry the 'KMSKS' region motif. Position 261 (lysine 261) interacts with ATP.

Belongs to the class-I aminoacyl-tRNA synthetase family. GluQ subfamily. The cofactor is Zn(2+).

Its function is as follows. Catalyzes the tRNA-independent activation of glutamate in presence of ATP and the subsequent transfer of glutamate onto a tRNA(Asp). Glutamate is transferred on the 2-amino-5-(4,5-dihydroxy-2-cyclopenten-1-yl) moiety of the queuosine in the wobble position of the QUC anticodon. This chain is Glutamyl-Q tRNA(Asp) synthetase, found in Ralstonia nicotianae (strain ATCC BAA-1114 / GMI1000) (Ralstonia solanacearum).